The following is a 690-amino-acid chain: Putative glycerophosphocholine phosphodiesterase GPCPD1 homolog 1 (690 aa).

In terms of domain architecture, CBM20 spans 1-122 (MDQDYKAHFK…RKNITDQFGS (122 aa)). One can recognise a GP-PDE domain in the interval 344–654 (MLQIGHRGMG…DRIGEDEVLK (311 aa)). The segment at 670–690 (ARSQHNSRSPSMSRRCMSTVE) is disordered. Low complexity predominate over residues 676–690 (SRSPSMSRRCMSTVE).

Belongs to the glycerophosphoryl diester phosphodiesterase family.

The sequence is that of Putative glycerophosphocholine phosphodiesterase GPCPD1 homolog 1 from Caenorhabditis elegans.